We begin with the raw amino-acid sequence, 382 residues long: MFLRAVVLTLALVAVTGARAEVSPDQVATVVWDYFSQLSNNAKEAVEHLQQSELTQQLNALFQDKLGQVNTYADNLQKKLVPFATELHERLTKDSEKLKEEIRKELEELRARLLPHANEVSQKIGDNVRELQQRLGPYADELRTQVNTHAEHLRRHLTSHAQRMEAVLRENVDNLQSSLTPYADEFKAKIDRNIEELKGHLTPYADELKVKIDQNVEELRRSLAPYAQDVQEKLNHQLEGLAFQMKKNAEELKAKITANADELRQRLAPVVEDVRGKLRDNAKGLQESLAQLNSHLDRQVEEFRHNMGPYGDTFNRALVQQVEELRQKLGSYAGGMEDHLSFLEKDLRDKVNSFFSTLKEKENQDMPLALPEQEQAPGPLES.

The first 20 residues, 1-20, serve as a signal peptide directing secretion; that stretch reads MFLRAVVLTLALVAVTGARA. 13 tandem repeats follow at residues 33 to 54, 60 to 81, 82 to 103, 115 to 136, 137 to 158, 159 to 180, 181 to 202, 203 to 224, 225 to 246, 247 to 268, 269 to 286, 287 to 308, and 309 to 330. Positions 33 to 330 are 13 X 22 AA approximate tandem repeats; sequence DYFSQLSNNA…QVEELRQKLG (298 aa). A disordered region spans residues 362–382; sequence ENQDMPLALPEQEQAPGPLES.

This sequence belongs to the apolipoprotein A1/A4/E family. In terms of assembly, homodimer.

Its subcellular location is the secreted. Its function is as follows. May have a role in chylomicrons and VLDL secretion and catabolism. Required for efficient activation of lipoprotein lipase by ApoC-II; potent activator of LCAT. Apoa-IV is a major component of HDL and chylomicrons. The polypeptide is Apolipoprotein A-IV (APOA4) (Acinonyx jubatus (Cheetah)).